A 300-amino-acid polypeptide reads, in one-letter code: Tyrosine recombinase XerC (300 aa).

The Core-binding (CB) domain occupies 2 to 88 (TQEGKLEQQF…SLRSFYTFLL (87 aa)). The Tyr recombinase domain occupies 109-294 (RLPKFFYSEE…TKEHLKSTYM (186 aa)). Residues arginine 150, lysine 174, histidine 246, arginine 249, and histidine 272 contribute to the active site. The active-site O-(3'-phospho-DNA)-tyrosine intermediate is the tyrosine 281.

It belongs to the 'phage' integrase family. XerC subfamily. In terms of assembly, forms a cyclic heterotetrameric complex composed of two molecules of XerC and two molecules of XerD.

The protein localises to the cytoplasm. In terms of biological role, site-specific tyrosine recombinase, which acts by catalyzing the cutting and rejoining of the recombining DNA molecules. The XerC-XerD complex is essential to convert dimers of the bacterial chromosome into monomers to permit their segregation at cell division. It also contributes to the segregational stability of plasmids. This Listeria welshimeri serovar 6b (strain ATCC 35897 / DSM 20650 / CCUG 15529 / CIP 8149 / NCTC 11857 / SLCC 5334 / V8) protein is Tyrosine recombinase XerC.